Consider the following 624-residue polypeptide: MNLEQLYDVIVVGGGHAGTEAALAAARLGVKTLLLTHNIDLLGQMSCNPAIGGIGKGHLVKEIDALDGAMAKAADQAGIQFRILNASKGPAVRATRAQADRVLYRKAIRTQLQSQANLTIFQQAVDDLKIEGGLVTGVVTQMGLTLKARAVVLTVGTFLGGKIHVGMNQYAGGRAGDPPSIALSKSLRDLDLPVGRLKTGTPPRIDRRTIDFSQMVEQPGDTPVPVFSYLGTASDHPQQVPCHITHTTEATHDIIRNNLDKSPMYAGVIEGVGPRYCPSIEDKIVRFADKTSHQIFVEPEGLTTEEIYPNGISTSLPFEVQVQFVRTIKGFENAHITRPGYAIEYDYFDPRGLTSFLQTKAIPNLFFAGQINGTTGYEEAAAQGIIAGMNAALQIKDQELWCPRRDEAYIGVLIDDLITCGTQEPYRMFTSRAEYRLLLREDNADLRLTEKGRQLGLVGDERWDSFSKKREAIESTQALLHNSWVRVHHNDLFKEALLNPMQHDCRAAEFLKRPEINYQHLLMMDDLNLPELPQEITEQIEIQNKYAGYIDRQQQEIEKLRKHENTMLPETLDYNDVVGLSSEVIQKLNRIKPTSLAQAGRISGVTPAALSLLLVHLKKSRLPV.

FAD is bound by residues 13-18, V125, and S180; that span reads GGGHAG. Residue 273 to 287 coordinates NAD(+); it reads GPRYCPSIEDKIVRF. Residue Q370 participates in FAD binding.

The protein belongs to the MnmG family. In terms of assembly, homodimer. Heterotetramer of two MnmE and two MnmG subunits. FAD is required as a cofactor.

Its subcellular location is the cytoplasm. In terms of biological role, NAD-binding protein involved in the addition of a carboxymethylaminomethyl (cmnm) group at the wobble position (U34) of certain tRNAs, forming tRNA-cmnm(5)s(2)U34. The sequence is that of tRNA uridine 5-carboxymethylaminomethyl modification enzyme MnmG from Legionella pneumophila (strain Corby).